The chain runs to 349 residues: AdoMet-dependent heme synthase (349 aa).

A Radical SAM core domain is found at 5 to 214; the sequence is TNAPRLIAWE…LHWFYEMQKE (210 aa). [4Fe-4S] cluster contacts are provided by C19, C23, and C26.

The protein belongs to the radical SAM superfamily. It depends on [4Fe-4S] cluster as a cofactor.

The enzyme catalyses Fe-coproporphyrin III + 2 S-adenosyl-L-methionine = heme b + 2 5'-deoxyadenosine + 2 L-methionine + 2 CO2. The protein operates within porphyrin-containing compound metabolism; protoheme biosynthesis. In terms of biological role, involved in siroheme-dependent heme b biosynthesis. Catalyzes the conversion of Fe-coproporphyrin III into heme by the oxidative decarboxylation of two propionate side chains. This chain is AdoMet-dependent heme synthase, found in Methanosarcina barkeri (strain Fusaro / DSM 804).